Here is a 365-residue protein sequence, read N- to C-terminus: Alanine racemase (365 aa).

The active-site Proton acceptor; specific for D-alanine is Lys-35. Lys-35 carries the post-translational modification N6-(pyridoxal phosphate)lysine. Arg-130 contacts substrate. The active-site Proton acceptor; specific for L-alanine is Tyr-256. Residue Met-304 participates in substrate binding.

It belongs to the alanine racemase family. The cofactor is pyridoxal 5'-phosphate.

The catalysed reaction is L-alanine = D-alanine. The protein operates within amino-acid biosynthesis; D-alanine biosynthesis; D-alanine from L-alanine: step 1/1. Functionally, catalyzes the interconversion of L-alanine and D-alanine. May also act on other amino acids. The polypeptide is Alanine racemase (alr) (Acidovorax sp. (strain JS42)).